The primary structure comprises 173 residues: Large ribosomal subunit protein uL10 (173 aa).

It belongs to the universal ribosomal protein uL10 family. As to quaternary structure, part of the ribosomal stalk of the 50S ribosomal subunit. The N-terminus interacts with L11 and the large rRNA to form the base of the stalk. The C-terminus forms an elongated spine to which L12 dimers bind in a sequential fashion forming a multimeric L10(L12)X complex.

Forms part of the ribosomal stalk, playing a central role in the interaction of the ribosome with GTP-bound translation factors. This chain is Large ribosomal subunit protein uL10, found in Geobacter sp. (strain M21).